Here is a 316-residue protein sequence, read N- to C-terminus: N-acetylmuramic acid 6-phosphate etherase (316 aa).

The disordered stretch occupies residues 1–23 (MAGFDPTLQPSDDRGHLLTEQSN). The region spanning 66–229 (ISKRLSSGGR…STTVMVRLGK (164 aa)) is the SIS domain. The active-site Proton donor is glutamate 94. Glutamate 125 is an active-site residue.

It belongs to the GCKR-like family. MurNAc-6-P etherase subfamily. Homodimer.

It catalyses the reaction N-acetyl-D-muramate 6-phosphate + H2O = N-acetyl-D-glucosamine 6-phosphate + (R)-lactate. It participates in amino-sugar metabolism; N-acetylmuramate degradation. Specifically catalyzes the cleavage of the D-lactyl ether substituent of MurNAc 6-phosphate, producing GlcNAc 6-phosphate and D-lactate. The chain is N-acetylmuramic acid 6-phosphate etherase from Synechococcus sp. (strain CC9902).